Reading from the N-terminus, the 86-residue chain is Toxin Cn1 (86 aa).

The first 19 residues, 1–19 (MNSLLMITACFVLIGTVWA), serve as a signal peptide directing secretion. One can recognise an LCN-type CS-alpha/beta domain in the interval 20–84 (KDGYLVDAKG…TWPLPNKTCS (65 aa)). Disulfide bonds link cysteine 30-cysteine 83, cysteine 34-cysteine 59, cysteine 43-cysteine 64, and cysteine 47-cysteine 66. Serine 84 bears the Serine amide mark.

The protein belongs to the long (4 C-C) scorpion toxin superfamily. Sodium channel inhibitor family. Beta subfamily. In terms of tissue distribution, expressed by the venom gland.

The protein localises to the secreted. Its function is as follows. Beta toxins bind voltage-independently at site-4 of sodium channels (Nav) and shift the voltage of activation toward more negative potentials thereby affecting sodium channel activation and promoting spontaneous and repetitive firing. The chain is Toxin Cn1 from Centruroides noxius (Mexican scorpion).